Here is a 279-residue protein sequence, read N- to C-terminus: Ankyrin repeat domain-containing protein 7 (279 aa).

Positions 1–11 (MKKFFPFRGKR) are enriched in basic residues. Residues 1–25 (MKKFFPFRGKRKTDDSHSHSSEVPI) are disordered. 5 ANK repeats span residues 80 to 109 (RSRT…KINV), 113 to 142 (ENRT…DPNL), 146 to 175 (YSNT…NLEA), 179 to 208 (DGHT…DVNA), and 212 to 241 (NHRT…DLAH).

The polypeptide is Ankyrin repeat domain-containing protein 7 (Ankrd7) (Mus musculus (Mouse)).